We begin with the raw amino-acid sequence, 253 residues long: MKFTVIIPARYASSRLPGKPLLDINGYPMIQYVWQKAQQAGANRVIIATDHPQIQTVAKAFGAEVCMTSDQHQSGTERLAEVVAKMAIADQEIIVNVQGDEPLIPPIIVQQVATNLDKNGVNMATLAVKLTTREELFNPNVVKTVINDKGMALYFSRAAVPFARDHFSECDDTFVASQCYLRHIGIYAYRAGFIKQYVAWQPTVLEQLESLEQLRALWYGEQIHVELAKQAPALGVDTAQDLARVRQMLSQTV.

The protein belongs to the KdsB family.

It localises to the cytoplasm. The enzyme catalyses 3-deoxy-alpha-D-manno-oct-2-ulosonate + CTP = CMP-3-deoxy-beta-D-manno-octulosonate + diphosphate. It participates in nucleotide-sugar biosynthesis; CMP-3-deoxy-D-manno-octulosonate biosynthesis; CMP-3-deoxy-D-manno-octulosonate from 3-deoxy-D-manno-octulosonate and CTP: step 1/1. Its pathway is bacterial outer membrane biogenesis; lipopolysaccharide biosynthesis. In terms of biological role, activates KDO (a required 8-carbon sugar) for incorporation into bacterial lipopolysaccharide in Gram-negative bacteria. The protein is 3-deoxy-manno-octulosonate cytidylyltransferase of Haemophilus ducreyi (strain 35000HP / ATCC 700724).